The primary structure comprises 232 residues: Large ribosomal subunit protein uL1 (232 aa).

Belongs to the universal ribosomal protein uL1 family. As to quaternary structure, part of the 50S ribosomal subunit.

In terms of biological role, binds directly to 23S rRNA. The L1 stalk is quite mobile in the ribosome, and is involved in E site tRNA release. Its function is as follows. Protein L1 is also a translational repressor protein, it controls the translation of the L11 operon by binding to its mRNA. The chain is Large ribosomal subunit protein uL1 from Sinorhizobium fredii (strain NBRC 101917 / NGR234).